The primary structure comprises 508 residues: ATP synthase subunit alpha, chloroplastic (508 aa).

Residue 171 to 178 (GDRQTGKT) participates in ATP binding.

It belongs to the ATPase alpha/beta chains family. In terms of assembly, F-type ATPases have 2 components, CF(1) - the catalytic core - and CF(0) - the membrane proton channel. CF(1) has five subunits: alpha(3), beta(3), gamma(1), delta(1), epsilon(1). CF(0) has four main subunits: a, b, b' and c.

The protein localises to the plastid. The protein resides in the chloroplast thylakoid membrane. The enzyme catalyses ATP + H2O + 4 H(+)(in) = ADP + phosphate + 5 H(+)(out). Produces ATP from ADP in the presence of a proton gradient across the membrane. The alpha chain is a regulatory subunit. The polypeptide is ATP synthase subunit alpha, chloroplastic (Gnetum parvifolium (Small-leaved jointfir)).